Reading from the N-terminus, the 376-residue chain is Putative glutamate--cysteine ligase 2-1 (376 aa).

The protein belongs to the glutamate--cysteine ligase type 2 family. YbdK subfamily.

The enzyme catalyses L-cysteine + L-glutamate + ATP = gamma-L-glutamyl-L-cysteine + ADP + phosphate + H(+). ATP-dependent carboxylate-amine ligase which exhibits weak glutamate--cysteine ligase activity. In Mycobacterium sp. (strain JLS), this protein is Putative glutamate--cysteine ligase 2-1.